A 126-amino-acid polypeptide reads, in one-letter code: Large ribosomal subunit protein bL12 (126 aa).

This sequence belongs to the bacterial ribosomal protein bL12 family. As to quaternary structure, homodimer. Part of the ribosomal stalk of the 50S ribosomal subunit. Forms a multimeric L10(L12)X complex, where L10 forms an elongated spine to which 2 to 4 L12 dimers bind in a sequential fashion. Binds GTP-bound translation factors.

Its function is as follows. Forms part of the ribosomal stalk which helps the ribosome interact with GTP-bound translation factors. Is thus essential for accurate translation. This chain is Large ribosomal subunit protein bL12, found in Nocardia farcinica (strain IFM 10152).